The chain runs to 257 residues: Ribonuclease HII (257 aa).

Residues 72–257 (TYIAGIDEVG…FAPIKDMIQK (186 aa)) enclose the RNase H type-2 domain. Positions 78, 79, and 170 each coordinate a divalent metal cation.

It belongs to the RNase HII family. Mn(2+) serves as cofactor. Mg(2+) is required as a cofactor.

Its subcellular location is the cytoplasm. It catalyses the reaction Endonucleolytic cleavage to 5'-phosphomonoester.. Endonuclease that specifically degrades the RNA of RNA-DNA hybrids. The sequence is that of Ribonuclease HII from Bacillus cereus (strain ATCC 10987 / NRS 248).